A 322-amino-acid polypeptide reads, in one-letter code: Glycerate dehydrogenase (322 aa).

Residues 158-159 (SI), Asp178, 239-241 (TAR), and Asp265 each bind NAD(+). Residue Arg241 is part of the active site. Glu270 is a catalytic residue. Catalysis depends on His288, which acts as the Proton donor. 288–291 (HIGS) contacts NAD(+).

It belongs to the D-isomer specific 2-hydroxyacid dehydrogenase family. Homodimer.

It carries out the reaction (R)-glycerate + NAD(+) = 3-hydroxypyruvate + NADH + H(+). Its pathway is one-carbon metabolism; formaldehyde assimilation via serine pathway. Functionally, active on hydroxypyruvate and glyoxylate. In Hyphomicrobium methylovorum, this protein is Glycerate dehydrogenase.